Reading from the N-terminus, the 307-residue chain is Ribosomal RNA small subunit methyltransferase H (307 aa).

S-adenosyl-L-methionine is bound by residues 31-33, D51, Y83, D97, and Q104; that span reads GGH.

The protein belongs to the methyltransferase superfamily. RsmH family.

Its subcellular location is the cytoplasm. It carries out the reaction cytidine(1402) in 16S rRNA + S-adenosyl-L-methionine = N(4)-methylcytidine(1402) in 16S rRNA + S-adenosyl-L-homocysteine + H(+). Specifically methylates the N4 position of cytidine in position 1402 (C1402) of 16S rRNA. The sequence is that of Ribosomal RNA small subunit methyltransferase H from Buchnera aphidicola subsp. Cinara cedri (strain Cc).